A 291-amino-acid chain; its full sequence is Undecaprenyl-diphosphatase (291 aa).

8 helical membrane passes run 1-21 (MIII…LTEF), 48-68 (SAFT…AWVF), 100-120 (LHVL…DDFI), 124-144 (LFSV…MIIA), 160-180 (INYV…WPGF), 201-221 (SDFT…LSLV), 230-250 (AHIP…LIAI), and 270-290 (IVLV…QGIS).

This sequence belongs to the UppP family.

The protein localises to the cell membrane. It catalyses the reaction di-trans,octa-cis-undecaprenyl diphosphate + H2O = di-trans,octa-cis-undecaprenyl phosphate + phosphate + H(+). Functionally, catalyzes the dephosphorylation of undecaprenyl diphosphate (UPP). Confers resistance to bacitracin. The protein is Undecaprenyl-diphosphatase of Staphylococcus haemolyticus (strain JCSC1435).